The following is a 195-amino-acid chain: MSDAPSGPPRLVVGVSGGSGIPYALDILRALRGLDVETHLVVSSGAKRVMSAEGGPQLADLTALASVVHDDRDLAAAVASGSYRTGGMLIVPCSAGTLAKVAHGFADNLISRAAHVTLKERRPLVLVVREDPMPRPMLQNMLAAHDAGATVMSASPGFYHAPESLGELLGFVTARVLDQFGLNAPGFRRWREDEA.

Residues 17–19, serine 43, 94–97, and arginine 129 contribute to the FMN site; these read GGS and SAGT. 2 residues coordinate dimethylallyl phosphate: tyrosine 159 and arginine 175.

It belongs to the UbiX/PAD1 family.

It carries out the reaction dimethylallyl phosphate + FMNH2 = prenylated FMNH2 + phosphate. Its function is as follows. Flavin prenyltransferase that catalyzes the synthesis of the prenylated FMN cofactor (prenyl-FMN) for 4-hydroxy-3-polyprenylbenzoic acid decarboxylase UbiD. The prenyltransferase is metal-independent and links a dimethylallyl moiety from dimethylallyl monophosphate (DMAP) to the flavin N5 and C6 atoms of FMN. In Deinococcus radiodurans (strain ATCC 13939 / DSM 20539 / JCM 16871 / CCUG 27074 / LMG 4051 / NBRC 15346 / NCIMB 9279 / VKM B-1422 / R1), this protein is Flavin prenyltransferase UbiX.